A 406-amino-acid polypeptide reads, in one-letter code: Peptidase T (406 aa).

His82 is a Zn(2+) binding site. Residue Asp84 is part of the active site. A Zn(2+)-binding site is contributed by Asp142. The active-site Proton acceptor is the Glu176. Positions 177, 199, and 381 each coordinate Zn(2+).

It belongs to the peptidase M20B family. Requires Zn(2+) as cofactor.

It is found in the cytoplasm. It catalyses the reaction Release of the N-terminal residue from a tripeptide.. In terms of biological role, cleaves the N-terminal amino acid of tripeptides. The protein is Peptidase T of Streptococcus agalactiae serotype III (strain NEM316).